The following is a 338-amino-acid chain: Glycerol-3-phosphate dehydrogenase [NAD(P)+] (338 aa).

Positions 14, 15, 35, and 109 each coordinate NADPH. Sn-glycerol 3-phosphate contacts are provided by Lys109, Gly138, and Thr140. Ala142 serves as a coordination point for NADPH. Lys194, Asp247, Ser257, Arg258, and Asn259 together coordinate sn-glycerol 3-phosphate. The active-site Proton acceptor is the Lys194. Arg258 lines the NADPH pocket. Positions 282 and 284 each coordinate NADPH.

This sequence belongs to the NAD-dependent glycerol-3-phosphate dehydrogenase family.

The protein localises to the cytoplasm. It carries out the reaction sn-glycerol 3-phosphate + NAD(+) = dihydroxyacetone phosphate + NADH + H(+). It catalyses the reaction sn-glycerol 3-phosphate + NADP(+) = dihydroxyacetone phosphate + NADPH + H(+). Its pathway is membrane lipid metabolism; glycerophospholipid metabolism. Catalyzes the reduction of the glycolytic intermediate dihydroxyacetone phosphate (DHAP) to sn-glycerol 3-phosphate (G3P), the key precursor for phospholipid synthesis. The polypeptide is Glycerol-3-phosphate dehydrogenase [NAD(P)+] (Shewanella oneidensis (strain ATCC 700550 / JCM 31522 / CIP 106686 / LMG 19005 / NCIMB 14063 / MR-1)).